Here is a 182-residue protein sequence, read N- to C-terminus: ATP synthase subunit delta (182 aa).

It belongs to the ATPase delta chain family. In terms of assembly, F-type ATPases have 2 components, F(1) - the catalytic core - and F(0) - the membrane proton channel. F(1) has five subunits: alpha(3), beta(3), gamma(1), delta(1), epsilon(1). CF(0) has four main subunits: a(1), b(1), b'(1) and c(10-14). The alpha and beta chains form an alternating ring which encloses part of the gamma chain. F(1) is attached to F(0) by a central stalk formed by the gamma and epsilon chains, while a peripheral stalk is formed by the delta, b and b' chains.

It is found in the cellular thylakoid membrane. F(1)F(0) ATP synthase produces ATP from ADP in the presence of a proton or sodium gradient. F-type ATPases consist of two structural domains, F(1) containing the extramembraneous catalytic core and F(0) containing the membrane proton channel, linked together by a central stalk and a peripheral stalk. During catalysis, ATP synthesis in the catalytic domain of F(1) is coupled via a rotary mechanism of the central stalk subunits to proton translocation. Functionally, this protein is part of the stalk that links CF(0) to CF(1). It either transmits conformational changes from CF(0) to CF(1) or is implicated in proton conduction. The chain is ATP synthase subunit delta from Prochlorococcus marinus (strain MIT 9211).